The following is a 157-amino-acid chain: UPF0225 protein PMI1492 (157 aa).

Belongs to the UPF0225 family.

In Proteus mirabilis (strain HI4320), this protein is UPF0225 protein PMI1492.